Consider the following 322-residue polypeptide: Acetylglutamate kinase (322 aa).

Substrate is bound by residues 89–90 (GG), Arg111, and Asn217.

The protein belongs to the acetylglutamate kinase family. ArgB subfamily.

It is found in the cytoplasm. The enzyme catalyses N-acetyl-L-glutamate + ATP = N-acetyl-L-glutamyl 5-phosphate + ADP. It participates in amino-acid biosynthesis; L-arginine biosynthesis; N(2)-acetyl-L-ornithine from L-glutamate: step 2/4. Its function is as follows. Catalyzes the ATP-dependent phosphorylation of N-acetyl-L-glutamate. The protein is Acetylglutamate kinase of Ehrlichia ruminantium (strain Welgevonden).